A 103-amino-acid chain; its full sequence is Small ribosomal subunit protein uS10 (103 aa).

It belongs to the universal ribosomal protein uS10 family. Part of the 30S ribosomal subunit.

In terms of biological role, involved in the binding of tRNA to the ribosomes. The sequence is that of Small ribosomal subunit protein uS10 from Baumannia cicadellinicola subsp. Homalodisca coagulata.